The following is a 464-amino-acid chain: Glutamate--tRNA ligase 2 (464 aa).

A 'HIGH' region motif is present at residues 11 to 21 (PSPTGFLHIGS). The short motif at 240 to 244 (KLSKR) is the 'KMSKS' region element. Lys-243 contacts ATP.

The protein belongs to the class-I aminoacyl-tRNA synthetase family. Glutamate--tRNA ligase type 1 subfamily. Monomer.

It is found in the cytoplasm. It catalyses the reaction tRNA(Glu) + L-glutamate + ATP = L-glutamyl-tRNA(Glu) + AMP + diphosphate. Its function is as follows. Catalyzes the attachment of glutamate to tRNA(Glu) in a two-step reaction: glutamate is first activated by ATP to form Glu-AMP and then transferred to the acceptor end of tRNA(Glu). This Rickettsia bellii (strain OSU 85-389) protein is Glutamate--tRNA ligase 2.